A 468-amino-acid chain; its full sequence is Trehalose-2-sulfate acyltransferase PapA2 (468 aa).

Belongs to the PapA acyltransferase family.

It carries out the reaction 2-O-sulfo-alpha,alpha-trehalose + hexadecanoyl-CoA = 2-O-sulfo-2'-O-hexadecanoyl-alpha,alpha-trehalose + CoA. In terms of biological role, catalyzes the acylation of trehalose-2-sulfate by adding the palmitoyl group at the 2'-position to yield the intermediate trehalose-2-sulfate-2'-palmitate (SL659). This Mycobacterium tuberculosis (strain ATCC 25177 / H37Ra) protein is Trehalose-2-sulfate acyltransferase PapA2 (papA2).